The primary structure comprises 105 residues: Cell division protein FtsL (105 aa).

Residues 1-22 (MIGNERHGLVGVIGADLIRNAK) are Cytoplasmic-facing. A helical transmembrane segment spans residues 23 to 43 (IPLILLVAVLISAVLVVTTAH). The Periplasmic portion of the chain corresponds to 44–105 (RTRLLTAERE…DPSQENIVIK (62 aa)).

Belongs to the FtsL family. Part of a complex composed of FtsB, FtsL and FtsQ.

The protein localises to the cell inner membrane. Its function is as follows. Essential cell division protein. May link together the upstream cell division proteins, which are predominantly cytoplasmic, with the downstream cell division proteins, which are predominantly periplasmic. The chain is Cell division protein FtsL from Yersinia pestis.